The sequence spans 226 residues: PKHD-type hydroxylase TERTU_2553 (226 aa).

Positions 78-177 constitute a Fe2OG dioxygenase domain; sequence KIYPPKFNCY…RVASFIWIQS (100 aa). Fe cation-binding residues include His-96, Asp-98, and His-158. A 2-oxoglutarate-binding site is contributed by Arg-168.

It depends on Fe(2+) as a cofactor. L-ascorbate is required as a cofactor.

This is PKHD-type hydroxylase TERTU_2553 from Teredinibacter turnerae (strain ATCC 39867 / T7901).